The chain runs to 118 residues: Large ribosomal subunit protein bL20 (118 aa).

This sequence belongs to the bacterial ribosomal protein bL20 family.

In terms of biological role, binds directly to 23S ribosomal RNA and is necessary for the in vitro assembly process of the 50S ribosomal subunit. It is not involved in the protein synthesizing functions of that subunit. In Salmonella arizonae (strain ATCC BAA-731 / CDC346-86 / RSK2980), this protein is Large ribosomal subunit protein bL20.